The primary structure comprises 298 residues: Chitin deacetylase (298 aa).

A signal peptide spans 1–16; it reads MLAPLFAALLAGAATA. One can recognise a NodB homology domain in the interval 39 to 222; sequence NTFALTFDDG…AIKAKGLTPV (184 aa). Residue Asp46 is the Proton acceptor of the active site. Asp46 lines the acetate pocket. Asp47, His99, and His103 together coordinate Co(2+). Residue Tyr140 coordinates acetate. The active-site Proton donor is the His196. Positions 256-298 constitute a Chitin-binding type-1 domain; it reads DDTCGGSNGYVCQNSQCCSQWGWCGTTSEYCAAGCQAAYGPCT. Cystine bridges form between Cys259–Cys273, Cys267–Cys279, Cys272–Cys286, and Cys290–Cys297.

This sequence belongs to the polysaccharide deacetylase family. Requires Co(2+) as cofactor.

It is found in the secreted. The catalysed reaction is [(1-&gt;4)-N-acetyl-beta-D-glucosaminyl](n) + n H2O = chitosan + n acetate. Inhibited by Fe(2+) and to a lesser extent by Mn(2+). Functionally, hydrolyzes the N-acetamido groups of N-acetyl-D-glucosamine polymers in chitin to form chitosan and acetate. May play a role in evasion of the host immune response; plant chitinases liberate chitin molecules from the fungal cell wall which act as elicitors of the plant immune response, deacetylation of the liberated chitin neutralizes elicitor activity. This is Chitin deacetylase from Pestalotiopsis sp.